Consider the following 371-residue polypeptide: tRNA-specific 2-thiouridylase MnmA (371 aa).

Residues 22–29 (GLSGGVDS) and M48 each bind ATP. The interval 108 to 110 (NPD) is interaction with target base in tRNA. C113 acts as the Nucleophile in catalysis. A disulfide bond links C113 and C209. G137 lines the ATP pocket. Positions 159–161 (KDQ) are interaction with tRNA. C209 functions as the Cysteine persulfide intermediate in the catalytic mechanism.

Belongs to the MnmA/TRMU family.

It is found in the cytoplasm. It carries out the reaction S-sulfanyl-L-cysteinyl-[protein] + uridine(34) in tRNA + AH2 + ATP = 2-thiouridine(34) in tRNA + L-cysteinyl-[protein] + A + AMP + diphosphate + H(+). Functionally, catalyzes the 2-thiolation of uridine at the wobble position (U34) of tRNA, leading to the formation of s(2)U34. In Coxiella burnetii (strain CbuG_Q212) (Coxiella burnetii (strain Q212)), this protein is tRNA-specific 2-thiouridylase MnmA.